Here is a 210-residue protein sequence, read N- to C-terminus: Large ribosomal subunit protein uL3 (210 aa).

Residues 126–152 (HGFRGGPKTHGQSDRHRAPGSIGAGTT) are disordered.

Belongs to the universal ribosomal protein uL3 family. In terms of assembly, part of the 50S ribosomal subunit. Forms a cluster with proteins L14 and L19.

In terms of biological role, one of the primary rRNA binding proteins, it binds directly near the 3'-end of the 23S rRNA, where it nucleates assembly of the 50S subunit. This Chloroflexus aurantiacus (strain ATCC 29366 / DSM 635 / J-10-fl) protein is Large ribosomal subunit protein uL3.